We begin with the raw amino-acid sequence, 227 residues long: Large ribosomal subunit protein uL3 (227 aa).

At Gln-151 the chain carries N5-methylglutamine.

Belongs to the universal ribosomal protein uL3 family. Part of the 50S ribosomal subunit. Forms a cluster with proteins L14 and L19. In terms of processing, methylated by PrmB.

Functionally, one of the primary rRNA binding proteins, it binds directly near the 3'-end of the 23S rRNA, where it nucleates assembly of the 50S subunit. This is Large ribosomal subunit protein uL3 from Gluconacetobacter diazotrophicus (strain ATCC 49037 / DSM 5601 / CCUG 37298 / CIP 103539 / LMG 7603 / PAl5).